We begin with the raw amino-acid sequence, 273 residues long: Shikimate dehydrogenase (NADP(+)) (273 aa).

Residues Ser14 to Ser16 and Thr61 contribute to the shikimate site. Lys65 (proton acceptor) is an active-site residue. Residues Asn86 and Asp102 each coordinate shikimate. NADP(+) is bound by residues Gly126 to Ala130, Asn150 to Lys155, and Met213. Position 215 (Tyr215) interacts with shikimate. Gly237 serves as a coordination point for NADP(+).

This sequence belongs to the shikimate dehydrogenase family. In terms of assembly, homodimer.

It carries out the reaction shikimate + NADP(+) = 3-dehydroshikimate + NADPH + H(+). It functions in the pathway metabolic intermediate biosynthesis; chorismate biosynthesis; chorismate from D-erythrose 4-phosphate and phosphoenolpyruvate: step 4/7. In terms of biological role, involved in the biosynthesis of the chorismate, which leads to the biosynthesis of aromatic amino acids. Catalyzes the reversible NADPH linked reduction of 3-dehydroshikimate (DHSA) to yield shikimate (SA). The protein is Shikimate dehydrogenase (NADP(+)) of Aeromonas salmonicida (strain A449).